Here is a 125-residue protein sequence, read N- to C-terminus: DNA-directed RNA polymerase I subunit RPA12 (125 aa).

The tract at residues 1–60 is interaction with RPA2; it reads MSVVGSLIFCLDCGDLLENPNAVLGSNVECSQCKAIYPKSQFSNLKVVTTTADDAFPSSL. A necessary and sufficient for recruitment into Pol I region spans residues 1–69; the sequence is MSVVGSLIFC…LRAKKSVVKT (69 aa). Residues cysteine 10, cysteine 13, cysteine 30, cysteine 33, cysteine 86, cysteine 89, cysteine 114, and cysteine 117 each contribute to the Zn(2+) site. The C4-type zinc finger occupies 10–33; it reads CLDCGDLLENPNAVLGSNVECSQC. The required for RNA cleavage, but not essential for elongation activity stretch occupies residues 79–125; the sequence is GATIKEKCPQCGNEEMNYHTLQLRSADEGATVFYTCTSCGYKFRTNN. The TFIIS-type zinc-finger motif lies at 82-122; it reads IKEKCPQCGNEEMNYHTLQLRSADEGATVFYTCTSCGYKFR.

The protein belongs to the archaeal RpoM/eukaryotic RPA12/RPB9/RPC11 RNA polymerase family. Component of the RNA polymerase I (Pol I) complex consisting of 14 subunits: RPA135, RPA190, RPC40, RPA14, RPB5, RPO26, RPA43, RPB8, RPA12, RPB10, RPC19, RPC10, RPA49 and RPA34. The complex is composed of a horseshoe-shaped core containing ten subunits (RPA135, RPA190, RPB5, RPO26, RPB8, RPB10, RPC10, RPA12, RPC19 and RPC40) where RPA135 and RPA190 form the DNA-binding cleft. Outside of the core, RPA14 and RPA43 form the stalk that mediates interactions with transcription initiation factors and newly synthesized RNA. Interacts with RPA2/RPA135. Peripheral subunit that binds the catalytic zinc ion that is required for RNA cleavage. The heterodimer formed by RPA34 and RPA49 stabilizes subunit RPA12 and stimulates RPA12-dependent RNA cleavage. Involved in the recruitment of RPA49 to Pol I.

Its subcellular location is the nucleus. It localises to the nucleolus. Functionally, DNA-dependent RNA polymerases catalyze the transcription of DNA into RNA using the four ribonucleoside triphosphates as substrates. Component of RNA polymerase I (Pol I) which synthesizes ribosomal RNA precursors. Besides, RNA polymerase I has intrinsic RNA cleavage activity. Proposed to contribute to the polymerase catalytic activity and form the polymerase active center together with the two largest subunits. Subunit RPA12 contributes a catalytic zinc ribbon that is required for RNA cleavage by Pol I. Involved in transcriptional termination. The chain is DNA-directed RNA polymerase I subunit RPA12 (RPA12) from Saccharomyces cerevisiae (strain ATCC 204508 / S288c) (Baker's yeast).